Here is a 282-residue protein sequence, read N- to C-terminus: MTIQWFPGHMAKARREVTEKLKLIDIVYELVDARIPMSSRNPMIEDILKNKPRIMLLNKADKADAAVTQQWKEHFENQGIRSLSINSVNGQGLNQIVPASKEILQEKFDRMRAKGVKPRAIRALIIGIPNVGKSTLINRLAKKNIAKTGDRPGITTSQQWVKVGKELELLDTPGILWPKFEDELVGLRLAVTGAIKDSIINLQDVAVFGLRFLEEHYPERLKERYGLDEIPEDIAELFDAIGEKRGCLMSGGLINYDKTTEVIIRDIRTEKFGRLSFEQPTM.

The 165-residue stretch at 14 to 178 (RREVTEKLKL…LLDTPGILWP (165 aa)) folds into the CP-type G domain. GTP-binding positions include 58–61 (NKAD), 86–87 (NS), 130–135 (NVGKST), and Gly-174.

This sequence belongs to the TRAFAC class YlqF/YawG GTPase family. MTG1 subfamily. In terms of assembly, interacts with ctc. Interacts with the immature 50S ribosome subunit. 2 molecules of RbgA bind to one 50S subunit.

The protein resides in the cytoplasm. Functionally, essential protein that is required for a late step of 50S ribosomal subunit assembly. Has GTPase activity that is stimulated by interaction with the immature 50S ribosome subunit. Binds to the 23S rRNA. Required for the association of ribosomal proteins RplP and RpmA with the large subunit. The sequence is that of Ribosome biogenesis GTPase A (rbgA) from Bacillus subtilis (strain 168).